Consider the following 1001-residue polypeptide: TonB-dependent receptor P3 (1001 aa).

An N-terminal signal peptide occupies residues 1–26 (MTTKNNKQLKSVLFMFLLLIGAYVKA). A TonB box motif is present at residues 109–116 (EEIVVIGY). Positions 120–232 (KKSDVSGSVS…ANGVIMVTTK (113 aa)) constitute a TBDR plug domain. Positions 238–1001 (KPTLELNTSY…TFTMGLNMKF (764 aa)) constitute a TBDR beta-barrel domain. Positions 984–1001 (YGSYPNVRTFTMGLNMKF) match the TonB C-terminal box motif.

It belongs to the TonB-dependent receptor family.

It is found in the cell outer membrane. Functionally, tonB-dependent receptor probably involved in ulvan degradation. Ulvan is the main polysaccharide component of the Ulvales (green seaweed) cell wall. It is composed of disaccharide building blocks comprising 3-sulfated rhamnose (Rha3S) linked to D-glucuronic acid (GlcA), L-iduronic acid (IduA), or D-xylose (Xyl). The TonB-dependent receptor may mediate transport of ulvan oligosaccharides from the surface of the outer membrane to the periplasm for subsequent degradation. The chain is TonB-dependent receptor P3 from Formosa agariphila (strain DSM 15362 / KCTC 12365 / LMG 23005 / KMM 3901 / M-2Alg 35-1).